Here is a 526-residue protein sequence, read N- to C-terminus: ATP synthase subunit alpha (526 aa).

178-185 provides a ligand contact to ATP; it reads GDRQTGKT.

It belongs to the ATPase alpha/beta chains family. F-type ATPases have 2 components, CF(1) - the catalytic core - and CF(0) - the membrane proton channel. CF(1) has five subunits: alpha(3), beta(3), gamma(1), delta(1), epsilon(1). CF(0) has four main subunits: a(1), b(1), b'(1) and c(9-12).

It localises to the cell membrane. It carries out the reaction ATP + H2O + 4 H(+)(in) = ADP + phosphate + 5 H(+)(out). In terms of biological role, produces ATP from ADP in the presence of a proton gradient across the membrane. The alpha chain is a regulatory subunit. This Roseiflexus castenholzii (strain DSM 13941 / HLO8) protein is ATP synthase subunit alpha.